The chain runs to 126 residues: Holo-[acyl-carrier-protein] synthase (126 aa).

The Mg(2+) site is built by Asp-8 and Glu-57.

This sequence belongs to the P-Pant transferase superfamily. AcpS family. Mg(2+) serves as cofactor.

It is found in the cytoplasm. It carries out the reaction apo-[ACP] + CoA = holo-[ACP] + adenosine 3',5'-bisphosphate + H(+). Transfers the 4'-phosphopantetheine moiety from coenzyme A to a Ser of acyl-carrier-protein. This Halorhodospira halophila (strain DSM 244 / SL1) (Ectothiorhodospira halophila (strain DSM 244 / SL1)) protein is Holo-[acyl-carrier-protein] synthase.